Reading from the N-terminus, the 236-residue chain is 2-C-methyl-D-erythritol 4-phosphate cytidylyltransferase (236 aa).

This sequence belongs to the IspD/TarI cytidylyltransferase family. IspD subfamily. In terms of assembly, homodimer.

It carries out the reaction 2-C-methyl-D-erythritol 4-phosphate + CTP + H(+) = 4-CDP-2-C-methyl-D-erythritol + diphosphate. The protein operates within isoprenoid biosynthesis; isopentenyl diphosphate biosynthesis via DXP pathway; isopentenyl diphosphate from 1-deoxy-D-xylulose 5-phosphate: step 2/6. Functionally, catalyzes the formation of 4-diphosphocytidyl-2-C-methyl-D-erythritol from CTP and 2-C-methyl-D-erythritol 4-phosphate (MEP). The chain is 2-C-methyl-D-erythritol 4-phosphate cytidylyltransferase from Salmonella paratyphi C (strain RKS4594).